A 396-amino-acid polypeptide reads, in one-letter code: Phosphoglycerate kinase (396 aa).

Residues 21–23, R37, 60–63, R121, and R154 contribute to the substrate site; these read DFN and HLGR. Residues K205, G296, E327, and 353–356 contribute to the ATP site; that span reads GGDS.

It belongs to the phosphoglycerate kinase family. As to quaternary structure, monomer.

It is found in the cytoplasm. It carries out the reaction (2R)-3-phosphoglycerate + ATP = (2R)-3-phospho-glyceroyl phosphate + ADP. It participates in carbohydrate degradation; glycolysis; pyruvate from D-glyceraldehyde 3-phosphate: step 2/5. The chain is Phosphoglycerate kinase from Anaeromyxobacter dehalogenans (strain 2CP-1 / ATCC BAA-258).